Reading from the N-terminus, the 113-residue chain is Large ribosomal subunit protein bL17 (113 aa).

This sequence belongs to the bacterial ribosomal protein bL17 family. As to quaternary structure, part of the 50S ribosomal subunit. Contacts protein L32.

This chain is Large ribosomal subunit protein bL17, found in Symbiobacterium thermophilum (strain DSM 24528 / JCM 14929 / IAM 14863 / T).